Here is a 327-residue protein sequence, read N- to C-terminus: Transaldolase (327 aa).

The active-site Schiff-base intermediate with substrate is Lys132.

This sequence belongs to the transaldolase family. Type 1 subfamily.

Its subcellular location is the cytoplasm. The catalysed reaction is D-sedoheptulose 7-phosphate + D-glyceraldehyde 3-phosphate = D-erythrose 4-phosphate + beta-D-fructose 6-phosphate. The protein operates within carbohydrate degradation; pentose phosphate pathway; D-glyceraldehyde 3-phosphate and beta-D-fructose 6-phosphate from D-ribose 5-phosphate and D-xylulose 5-phosphate (non-oxidative stage): step 2/3. Transaldolase is important for the balance of metabolites in the pentose-phosphate pathway. This is Transaldolase from Chlamydia pneumoniae (Chlamydophila pneumoniae).